The chain runs to 161 residues: Putative 4-hydroxy-4-methyl-2-oxoglutarate aldolase (161 aa).

Residues 75-78 (GDQL) and Arg-97 contribute to the substrate site. Asp-98 serves as a coordination point for a divalent metal cation.

It belongs to the class II aldolase/RraA-like family. In terms of assembly, homotrimer. Requires a divalent metal cation as cofactor.

The catalysed reaction is 4-hydroxy-4-methyl-2-oxoglutarate = 2 pyruvate. The enzyme catalyses oxaloacetate + H(+) = pyruvate + CO2. In terms of biological role, catalyzes the aldol cleavage of 4-hydroxy-4-methyl-2-oxoglutarate (HMG) into 2 molecules of pyruvate. Also contains a secondary oxaloacetate (OAA) decarboxylase activity due to the common pyruvate enolate transition state formed following C-C bond cleavage in the retro-aldol and decarboxylation reactions. In Vibrio cholerae serotype O1 (strain ATCC 39315 / El Tor Inaba N16961), this protein is Putative 4-hydroxy-4-methyl-2-oxoglutarate aldolase.